Consider the following 307-residue polypeptide: Glutaminase 1 (307 aa).

7 residues coordinate substrate: S62, N114, E159, N166, Y190, Y242, and V260.

It belongs to the glutaminase family. Homotetramer.

The catalysed reaction is L-glutamine + H2O = L-glutamate + NH4(+). The sequence is that of Glutaminase 1 from Clostridium perfringens (strain 13 / Type A).